A 1301-amino-acid chain; its full sequence is DNA-directed RNA polymerase subunit beta (1301 aa).

Belongs to the RNA polymerase beta chain family. As to quaternary structure, the RNAP catalytic core consists of 2 alpha, 1 beta, 1 beta' and 1 omega subunit. When a sigma factor is associated with the core the holoenzyme is formed, which can initiate transcription.

It carries out the reaction RNA(n) + a ribonucleoside 5'-triphosphate = RNA(n+1) + diphosphate. Its function is as follows. DNA-dependent RNA polymerase catalyzes the transcription of DNA into RNA using the four ribonucleoside triphosphates as substrates. In Chlorobium luteolum (strain DSM 273 / BCRC 81028 / 2530) (Pelodictyon luteolum), this protein is DNA-directed RNA polymerase subunit beta.